Reading from the N-terminus, the 323-residue chain is Pectate lyase A (323 aa).

A signal peptide spans M1 to R31. N95 is a glycosylation site (N-linked (GlcNAc...) asparagine). Ca(2+) contacts are provided by D136, D165, and D169. Residue R222 is part of the active site.

Belongs to the polysaccharide lyase 1 family. Ca(2+) serves as cofactor.

It localises to the secreted. The enzyme catalyses Eliminative cleavage of (1-&gt;4)-alpha-D-galacturonan to give oligosaccharides with 4-deoxy-alpha-D-galact-4-enuronosyl groups at their non-reducing ends.. In terms of biological role, pectinolytic enzyme consist of four classes of enzymes: pectin lyase, polygalacturonase, pectin methylesterase and rhamnogalacturonase. Among pectinolytic enzymes, pectin lyase is the most important in depolymerization of pectin, since it cleaves internal glycosidic bonds of highly methylated pectins. Favors pectate, the anion, over pectin, the methyl ester. The protein is Pectate lyase A (plyA) of Aspergillus niger.